The sequence spans 166 residues: Large ribosomal subunit protein uL11 (166 aa).

R67 carries the N5-methylarginine modification.

This sequence belongs to the universal ribosomal protein uL11 family.

This Encephalitozoon cuniculi (strain GB-M1) (Microsporidian parasite) protein is Large ribosomal subunit protein uL11 (RPL12).